Reading from the N-terminus, the 98-residue chain is Plastocyanin (98 aa).

Positions 1–98 (DVTVKLGADS…AGMKGTITVQ (98 aa)) constitute a Plastocyanin-like domain. Positions 38, 83, 86, and 91 each coordinate Cu cation.

It belongs to the plastocyanin family. Cu(2+) is required as a cofactor.

It localises to the plastid. Its subcellular location is the chloroplast thylakoid membrane. Participates in electron transfer between P700 and the cytochrome b6-f complex in photosystem I. The sequence is that of Plastocyanin (petE) from Scenedesmus fuscus (Green alga).